The following is a 75-amino-acid chain: Small ribosomal subunit protein bS18 (75 aa).

This sequence belongs to the bacterial ribosomal protein bS18 family. As to quaternary structure, part of the 30S ribosomal subunit. Forms a tight heterodimer with protein bS6.

Binds as a heterodimer with protein bS6 to the central domain of the 16S rRNA, where it helps stabilize the platform of the 30S subunit. The chain is Small ribosomal subunit protein bS18 from Anaplasma marginale (strain St. Maries).